Reading from the N-terminus, the 326-residue chain is Metallophosphoesterase domain-containing protein 1 (326 aa).

It belongs to the UPF0046 family. Expressed predominantly in adult brain.

Functionally, may have metallophosphoesterase activity (in vitro). The protein is Metallophosphoesterase domain-containing protein 1 (MPPED1) of Homo sapiens (Human).